We begin with the raw amino-acid sequence, 310 residues long: Ribosomal RNA small subunit methyltransferase H (310 aa).

Residues 33–35, Asp53, Phe79, Asp100, and Gln107 contribute to the S-adenosyl-L-methionine site; that span reads AGH.

It belongs to the methyltransferase superfamily. RsmH family.

It localises to the cytoplasm. The catalysed reaction is cytidine(1402) in 16S rRNA + S-adenosyl-L-methionine = N(4)-methylcytidine(1402) in 16S rRNA + S-adenosyl-L-homocysteine + H(+). In terms of biological role, specifically methylates the N4 position of cytidine in position 1402 (C1402) of 16S rRNA. This Clostridium botulinum (strain Alaska E43 / Type E3) protein is Ribosomal RNA small subunit methyltransferase H.